A 75-amino-acid polypeptide reads, in one-letter code: Small ribosomal subunit protein bS18 (75 aa).

This sequence belongs to the bacterial ribosomal protein bS18 family. In terms of assembly, part of the 30S ribosomal subunit. Forms a tight heterodimer with protein bS6.

Its function is as follows. Binds as a heterodimer with protein bS6 to the central domain of the 16S rRNA, where it helps stabilize the platform of the 30S subunit. The sequence is that of Small ribosomal subunit protein bS18 from Teredinibacter turnerae (strain ATCC 39867 / T7901).